The primary structure comprises 277 residues: Undecaprenyl-diphosphatase (277 aa).

7 helical membrane passes run 1-21 (MTWIEAIILGLVQGLTEFLPI), 41-61 (GAAFTAITQLGTELAVLIYFW), 90-110 (WLIIVGSIPIAVLGLLLEDWI), 114-134 (FRSLWITATMLIVFGVLLALA), 191-211 (AFLLAVPAVFASGLYKLYTSL), 224-244 (ETLVATAVAFVVAYAVIAWLM), and 255-275 (FVWYRILLGGVLFALLGAGVI).

It belongs to the UppP family.

The protein localises to the cell membrane. The enzyme catalyses di-trans,octa-cis-undecaprenyl diphosphate + H2O = di-trans,octa-cis-undecaprenyl phosphate + phosphate + H(+). Its function is as follows. Catalyzes the dephosphorylation of undecaprenyl diphosphate (UPP). Confers resistance to bacitracin. The polypeptide is Undecaprenyl-diphosphatase (Micrococcus luteus (strain ATCC 4698 / DSM 20030 / JCM 1464 / CCM 169 / CCUG 5858 / IAM 1056 / NBRC 3333 / NCIMB 9278 / NCTC 2665 / VKM Ac-2230) (Micrococcus lysodeikticus)).